Here is a 233-residue protein sequence, read N- to C-terminus: Small ribosomal subunit protein uS2 (233 aa).

This sequence belongs to the universal ribosomal protein uS2 family.

The polypeptide is Small ribosomal subunit protein uS2 (Clostridium botulinum (strain Alaska E43 / Type E3)).